Consider the following 321-residue polypeptide: Glucokinase (321 aa).

Position 8 to 13 (8 to 13) interacts with ATP; the sequence is GDVGGT.

It belongs to the bacterial glucokinase family.

It is found in the cytoplasm. The catalysed reaction is D-glucose + ATP = D-glucose 6-phosphate + ADP + H(+). The chain is Glucokinase from Shigella sonnei (strain Ss046).